The chain runs to 286 residues: Protein NipSnap homolog 2 (286 aa).

The transit peptide at 1 to 40 (MATRVLHSSCSGLYRAAGPARGKGHATAVIRSLSASHNRP) directs the protein to the mitochondrion.

This sequence belongs to the NipSnap family.

It is found in the mitochondrion matrix. Protein involved in mitophagy. Accumulates on the mitochondria surface in response to mitochondrial depolarization and acts as a 'eat me' signal by recruiting proteins involved in selective autophagy. The sequence is that of Protein NipSnap homolog 2 (nipsnap2) from Danio rerio (Zebrafish).